A 367-amino-acid polypeptide reads, in one-letter code: tRNA/tmRNA (uracil-C(5))-methyltransferase (367 aa).

Residues Gln190, Tyr218, Asn223, Glu239, and Asp299 each coordinate S-adenosyl-L-methionine. The active-site Nucleophile is the Cys324. Glu358 (proton acceptor) is an active-site residue.

Belongs to the class I-like SAM-binding methyltransferase superfamily. RNA M5U methyltransferase family. TrmA subfamily.

The enzyme catalyses uridine(54) in tRNA + S-adenosyl-L-methionine = 5-methyluridine(54) in tRNA + S-adenosyl-L-homocysteine + H(+). It catalyses the reaction uridine(341) in tmRNA + S-adenosyl-L-methionine = 5-methyluridine(341) in tmRNA + S-adenosyl-L-homocysteine + H(+). In terms of biological role, dual-specificity methyltransferase that catalyzes the formation of 5-methyluridine at position 54 (m5U54) in all tRNAs, and that of position 341 (m5U341) in tmRNA (transfer-mRNA). The sequence is that of tRNA/tmRNA (uracil-C(5))-methyltransferase from Erwinia tasmaniensis (strain DSM 17950 / CFBP 7177 / CIP 109463 / NCPPB 4357 / Et1/99).